The chain runs to 731 residues: 1,4-alpha-glucan branching enzyme GlgB (731 aa).

Asp408 functions as the Nucleophile in the catalytic mechanism. The Proton donor role is filled by Glu461.

Belongs to the glycosyl hydrolase 13 family. GlgB subfamily. As to quaternary structure, monomer.

It carries out the reaction Transfers a segment of a (1-&gt;4)-alpha-D-glucan chain to a primary hydroxy group in a similar glucan chain.. The protein operates within glycan biosynthesis; glycogen biosynthesis. In terms of biological role, catalyzes the formation of the alpha-1,6-glucosidic linkages in glycogen by scission of a 1,4-alpha-linked oligosaccharide from growing alpha-1,4-glucan chains and the subsequent attachment of the oligosaccharide to the alpha-1,6 position. The polypeptide is 1,4-alpha-glucan branching enzyme GlgB (Corynebacterium efficiens (strain DSM 44549 / YS-314 / AJ 12310 / JCM 11189 / NBRC 100395)).